The sequence spans 781 residues: Death domain-containing protein 1 (781 aa).

2 ZU5 domains span residues 167–301 and 302–483; these read IMEK…VSCL and KKES…VLHL. A Death domain is found at 679–764; it reads DNLLHWLAEE…DLAEELKFKW (86 aa).

The sequence is that of Death domain-containing protein 1 (DTHD1) from Homo sapiens (Human).